A 78-amino-acid chain; its full sequence is Dermaseptin-B1 (78 aa).

A signal peptide spans 1–22; it reads MDILKKSLFLVLFLGLVSLSIC. A propeptide spanning residues 23–42 is cleaved from the precursor; that stretch reads EEEKRENEDEEKQDDEQSEM. Gln75 carries the post-translational modification Glutamine amide. Residues 76–78 constitute a propeptide that is removed on maturation; the sequence is GEQ.

Belongs to the frog skin active peptide (FSAP) family. Dermaseptin subfamily. In terms of tissue distribution, expressed by the skin glands.

The protein localises to the secreted. Its function is as follows. Possesses a potent antimicrobial activity against bacteria, fungi and protozoa. Probably acts by disturbing membrane functions with its amphipathic structure. In Phyllomedusa bicolor (Two-colored leaf frog), this protein is Dermaseptin-B1.